We begin with the raw amino-acid sequence, 1026 residues long: Vacuolar protein sorting-associated protein 18 homolog (1026 aa).

A coiled-coil region spans residues 858-896 (IVDFLKRNKQRLEKLERSMKEATEIASEIRDKQEKLKNR). The RING-type; degenerate zinc finger occupies 906–932 (CSHCARPISGRAFNVHSCRHFFHRECL).

As to quaternary structure, probable core component of at least two putative endosomal tethering complexes, the homotypic fusion and vacuole protein sorting (HOPS) complex and the class C core vacuole/endosome tethering (CORVET) complex. Their common core is composed of the class C Vps proteins vps-11, vps-16 and vps-18, which in HOPS further associates with vps-33.1, vps-39 and vps-41 and in CORVET with vps-8 and vps-33.2. In hermaphrodites, expressed in coelomocytes and gonadal sheath cells.

Its subcellular location is the cytoplasm. It localises to the late endosome membrane. It is found in the lysosome membrane. The protein localises to the early endosome. The protein resides in the cytoplasmic vesicle. Its subcellular location is the autophagosome. It localises to the clathrin-coated vesicle. Plays a role in vesicle-mediated protein trafficking to lysosomal compartments including the endocytic membrane transport and autophagic pathways. Believed to act as a core component of the putative HOPS and CORVET endosomal tethering complexes which are proposed to be involved in the rab-5-to-rab-7 endosome conversion probably implicating sand-1, and via binding SNAREs and SNARE complexes to mediate tethering and docking events during SNARE-mediated membrane fusion. The HOPS complex is proposed to be recruited to rab-7 on the late endosomal membrane and to regulate late endocytic, phagocytic and autophagic traffic towards lysosomes. Within the HOPS complex, contributes to the normal development of gut granules in intestinal cells of the embryo, and also promotes the trafficking of embryonic intestinal gut granules away from lysosomes. The CORVET complex is proposed to function as a rab-5 effector to mediate early endosome fusion probably in specific endosome subpopulations. Required for fusion of endosomes and autophagosomes with lysosomes. Plays a role in the degradation of apoptotic cells during programmed cell death. The sequence is that of Vacuolar protein sorting-associated protein 18 homolog from Caenorhabditis elegans.